The sequence spans 229 residues: Cytochrome c oxidase subunit 2 (229 aa).

The Mitochondrial intermembrane portion of the chain corresponds to 1–26; the sequence is MATWAQFGLQDASSPLMEELTYFHDY. The helical transmembrane segment at 27 to 48 threads the bilayer; sequence ALIVLTLITILVFYGLVSLLLS. At 49–62 the chain is on the mitochondrial matrix side; it reads SSTNRFFLEGQELE. The helical transmembrane segment at 63 to 82 threads the bilayer; that stretch reads TIWTVVPAFILIFIALPSLQ. The Mitochondrial intermembrane segment spans residues 83–229; that stretch reads LLYLMDEVNN…ENWVAQYIEE (147 aa). 6 residues coordinate Cu cation: H161, C196, E198, C200, H204, and M207. Mg(2+) is bound at residue E198.

This sequence belongs to the cytochrome c oxidase subunit 2 family. Component of the cytochrome c oxidase (complex IV, CIV), a multisubunit enzyme composed of a catalytic core of 3 subunits and several supernumerary subunits. The complex exists as a monomer or a dimer and forms supercomplexes (SCs) in the inner mitochondrial membrane with ubiquinol-cytochrome c oxidoreductase (cytochrome b-c1 complex, complex III, CIII). Requires Cu cation as cofactor.

The protein resides in the mitochondrion inner membrane. It catalyses the reaction 4 Fe(II)-[cytochrome c] + O2 + 8 H(+)(in) = 4 Fe(III)-[cytochrome c] + 2 H2O + 4 H(+)(out). Component of the cytochrome c oxidase, the last enzyme in the mitochondrial electron transport chain which drives oxidative phosphorylation. The respiratory chain contains 3 multisubunit complexes succinate dehydrogenase (complex II, CII), ubiquinol-cytochrome c oxidoreductase (cytochrome b-c1 complex, complex III, CIII) and cytochrome c oxidase (complex IV, CIV), that cooperate to transfer electrons derived from NADH and succinate to molecular oxygen, creating an electrochemical gradient over the inner membrane that drives transmembrane transport and the ATP synthase. Cytochrome c oxidase is the component of the respiratory chain that catalyzes the reduction of oxygen to water. Electrons originating from reduced cytochrome c in the intermembrane space (IMS) are transferred via the dinuclear copper A center (CU(A)) of subunit 2 and heme A of subunit 1 to the active site in subunit 1, a binuclear center (BNC) formed by heme A3 and copper B (CU(B)). The BNC reduces molecular oxygen to 2 water molecules using 4 electrons from cytochrome c in the IMS and 4 protons from the mitochondrial matrix. The polypeptide is Cytochrome c oxidase subunit 2 (COII) (Paracentrotus lividus (Common sea urchin)).